A 535-amino-acid polypeptide reads, in one-letter code: Cytochrome P450 monooxygenase BOA7 (535 aa).

Residues 20-37 traverse the membrane as a helical segment; sequence SIFLILGFFVLAAILIAW. Residues Asn65, Asn148, Asn180, and Asn420 are each glycosylated (N-linked (GlcNAc...) asparagine). A heme-binding site is contributed by Cys478.

It belongs to the cytochrome P450 family. Requires heme as cofactor.

Its subcellular location is the membrane. Its pathway is polyketide biosynthesis. Its function is as follows. Cytochrome P450 monooxygenase; part of the gene cluster B that mediates the biosynthesis of botcinic acid and its botcinin derivatives, acetate-derived polyketides that contribute to virulence when combined with the sesquiterpene botrydial. Botcinic acid and its derivatives have been shown to induce chlorosis and necrosis during host plant infection, but also have antifungal activities. Two polyketide synthases, BOA6 and BOA9, are involved in the biosynthesis of botcinins. BOA6 mediates the formation of the per-methylated tetraketide core by condensation of four units of malonyl-CoA with one unit of acetyl-CoA, which would be methylated in activated methylene groups to yield a bicyclic acid intermediate that could then either be converted to botrylactone derivatives or lose the starter acetate unit through a retro-Claisen type C-C bond cleavage to yield botcinin derivatives. The second polyketide synthase, BOA9, is probably required for the biosynthesis of the tetraketide side chain of botcinins. The methyltransferase (MT) domain within BOA6 is probably responsible for the incorporation of four methyl groups. The trans-enoyl reductase BOA5 might take over the enoyl reductase function of BOA6 that misses an ER domain. The monooxygenases BOA2, BOA3 and BOA4 might be involved in further hydroxylations at C4, C5 and C8, whereas BOA7, close to BOA9, could potentially be involved in the hydroxylation at C4 in the side chain of botcinins. The protein is Cytochrome P450 monooxygenase BOA7 of Botryotinia fuckeliana (strain B05.10) (Noble rot fungus).